We begin with the raw amino-acid sequence, 562 residues long: Scaffold protein FimL (562 aa).

As to quaternary structure, interacts with PilG and FimV.

The protein resides in the cytoplasm. In terms of biological role, regulates multiple virulence functions including type IV pilus (T4P)-mediated assembly and twitching motility as well as cAMP-dependent virulence gene expression. Regulates intracellular cyclic AMP (cAMP) levels through the activation of adenylate cyclase CyaB. Also functions as a scaffold linking FimV and PilG at the pole, where type IV pilus (T4P), the Chp chemosensory system and the CyaB adenylate cyclase interact. The protein is Scaffold protein FimL (fimL) of Pseudomonas aeruginosa (strain ATCC 15692 / DSM 22644 / CIP 104116 / JCM 14847 / LMG 12228 / 1C / PRS 101 / PAO1).